The sequence spans 496 residues: Cytochrome P450 71D18 (496 aa).

The helical; Signal-anchor for type II membrane protein transmembrane segment at 2 to 22 threads the bilayer; the sequence is ELDLLSAIIILVATYIVSLLI. Cysteine 436 is a binding site for heme.

The protein belongs to the cytochrome P450 family. Heme serves as cofactor.

It localises to the endoplasmic reticulum membrane. It catalyses the reaction (4S)-limonene + reduced [NADPH--hemoprotein reductase] + O2 = (1S,5R)-carveol + oxidized [NADPH--hemoprotein reductase] + H2O + H(+). Its function is as follows. Hydroxylates (-)-(4S)-limonene to (-)-trans-carveol, a precursor of (-)-carvone. Fluorinated substrate analogs are hydroxylated with the same regio- and stereochemistry. The polypeptide is Cytochrome P450 71D18 (CYP71D18) (Mentha gracilis (Gingermint)).